The primary structure comprises 250 residues: Zinc finger protein lsy-27 (250 aa).

2 C2H2-type zinc fingers span residues 25 to 48 and 52 to 75; these read FVCSSCSQNFQHSASLNRHRQLMH and HTCMMCERALNQKETIREHMRNEH. Residues 81–104 form a C2H2-type 3; degenerate zinc finger; that stretch reads FTCGCCNWTFASKRQLTEHTKCIQ. Disordered stretches follow at residues 126–177 and 226–250; these read IQST…EAER and QKVKAEGPAVESKMIPEKHVKQEIE. The segment covering 148–165 has biased composition (low complexity); that stretch reads SLSPSSSVSTSISSRDAS. Positions 239–250 are enriched in basic and acidic residues; that stretch reads MIPEKHVKQEIE.

In terms of biological role, involved in regulating left/right asymmetric differentiation of the gustatory ASE neurons. Plays a role in modulating expression of LIM/homeobox protein lim-6. This Caenorhabditis elegans protein is Zinc finger protein lsy-27.